The following is a 282-amino-acid chain: UDP-3-O-acyl-N-acetylglucosamine deacetylase (282 aa).

Zn(2+)-binding residues include histidine 74, histidine 226, and aspartate 230. Catalysis depends on histidine 253, which acts as the Proton donor.

The protein belongs to the LpxC family. It depends on Zn(2+) as a cofactor.

The catalysed reaction is a UDP-3-O-[(3R)-3-hydroxyacyl]-N-acetyl-alpha-D-glucosamine + H2O = a UDP-3-O-[(3R)-3-hydroxyacyl]-alpha-D-glucosamine + acetate. It participates in glycolipid biosynthesis; lipid IV(A) biosynthesis; lipid IV(A) from (3R)-3-hydroxytetradecanoyl-[acyl-carrier-protein] and UDP-N-acetyl-alpha-D-glucosamine: step 2/6. In terms of biological role, catalyzes the hydrolysis of UDP-3-O-myristoyl-N-acetylglucosamine to form UDP-3-O-myristoylglucosamine and acetate, the committed step in lipid A biosynthesis. The chain is UDP-3-O-acyl-N-acetylglucosamine deacetylase from Aquifex aeolicus (strain VF5).